A 294-amino-acid chain; its full sequence is Nucleotide-binding protein Reut_A0350 (294 aa).

Residue 8 to 15 (GISGSGKS) participates in ATP binding. 57–60 (DIRS) lines the GTP pocket.

The protein belongs to the RapZ-like family.

In terms of biological role, displays ATPase and GTPase activities. The protein is Nucleotide-binding protein Reut_A0350 of Cupriavidus pinatubonensis (strain JMP 134 / LMG 1197) (Cupriavidus necator (strain JMP 134)).